Here is a 250-residue protein sequence, read N- to C-terminus: 2,3-bisphosphoglycerate-dependent phosphoglycerate mutase (250 aa).

Substrate-binding positions include 10–17, 23–24, arginine 62, 89–92, lysine 100, 116–117, and 185–186; these read RHGESQWN, TG, ERHY, RR, and GN. Histidine 11 (tele-phosphohistidine intermediate) is an active-site residue. Catalysis depends on glutamate 89, which acts as the Proton donor/acceptor.

Belongs to the phosphoglycerate mutase family. BPG-dependent PGAM subfamily. Homodimer.

The enzyme catalyses (2R)-2-phosphoglycerate = (2R)-3-phosphoglycerate. The protein operates within carbohydrate degradation; glycolysis; pyruvate from D-glyceraldehyde 3-phosphate: step 3/5. Catalyzes the interconversion of 2-phosphoglycerate and 3-phosphoglycerate. The chain is 2,3-bisphosphoglycerate-dependent phosphoglycerate mutase from Yersinia enterocolitica serotype O:8 / biotype 1B (strain NCTC 13174 / 8081).